The primary structure comprises 268 residues: Cell division coordinator CpoB (268 aa).

The signal sequence occupies residues 1-21 (MRMCRRVVTVLALSLPLAAWA). Residues 58 to 94 (QLFMQLQQMQDQLSRQQGIIEELQNDVSRMKQENLER) are a coiled coil. The disordered stretch occupies residues 104–146 (SGAAPAATPDNSSGGGASNAAPDAAAGAAAQQPAGSSQPGDPA). Positions 121–143 (SNAAPDAAAGAAAQQPAGSSQPG) are enriched in low complexity. 3 TPR repeats span residues 149-181 (KLYYDAAFDLIKQKDFDKASQAFNAFLRKYPNS), 185-218 (GNAQYWLGEVNLAKGDLQGASQAFAQVSQKYPKH), and 222-255 (PDSLYKLADVERRMGHTDKVKGILQQVVTQYPGT).

Belongs to the CpoB family.

Its subcellular location is the periplasm. Functionally, mediates coordination of peptidoglycan synthesis and outer membrane constriction during cell division. The sequence is that of Cell division coordinator CpoB from Pseudomonas putida (strain ATCC 47054 / DSM 6125 / CFBP 8728 / NCIMB 11950 / KT2440).